A 225-amino-acid chain; its full sequence is 2-amino-5-formylamino-6-ribosylaminopyrimidin-4(3H)-one 5'-monophosphate deformylase (225 aa).

Fe cation contacts are provided by Glu28, His30, Asp39, and His107.

This sequence belongs to the creatininase superfamily. FAPy deformylase family. Homodimer. The cofactor is Fe(2+). Zn(2+) serves as cofactor.

The catalysed reaction is 2-amino-5-formylamino-6-(5-phospho-D-ribosylamino)pyrimidin-4(3H)-one + H2O = 2,5-diamino-6-(1-D-ribosylamino)pyrimidin-4(3H)-one 5'-phosphate + formate + H(+). It functions in the pathway cofactor biosynthesis; coenzyme F420 biosynthesis. It participates in cofactor biosynthesis; riboflavin biosynthesis. Catalyzes the hydrolysis of the formamide of 2-amino-5-formylamino-6-ribosylamino-4(3H)-pyrimidinone 5'-monophosphate (FAPy) to form 2,5-diamino-6-ribosylamino-4(3H)-pyrimidinone 5'-phosphate (APy). This chain is 2-amino-5-formylamino-6-ribosylaminopyrimidin-4(3H)-one 5'-monophosphate deformylase, found in Methanocaldococcus sp. (strain FS406-22).